The following is a 426-amino-acid chain: Serine--tRNA ligase (426 aa).

233–235 is an L-serine binding site; sequence TAE. 264 to 266 lines the ATP pocket; that stretch reads RSE. L-serine is bound at residue glutamate 287. ATP is bound at residue 351 to 354; the sequence is EISS. Residue serine 387 participates in L-serine binding.

This sequence belongs to the class-II aminoacyl-tRNA synthetase family. Type-1 seryl-tRNA synthetase subfamily. In terms of assembly, homodimer. The tRNA molecule binds across the dimer.

It is found in the cytoplasm. The enzyme catalyses tRNA(Ser) + L-serine + ATP = L-seryl-tRNA(Ser) + AMP + diphosphate + H(+). It catalyses the reaction tRNA(Sec) + L-serine + ATP = L-seryl-tRNA(Sec) + AMP + diphosphate + H(+). It functions in the pathway aminoacyl-tRNA biosynthesis; selenocysteinyl-tRNA(Sec) biosynthesis; L-seryl-tRNA(Sec) from L-serine and tRNA(Sec): step 1/1. Functionally, catalyzes the attachment of serine to tRNA(Ser). Is also able to aminoacylate tRNA(Sec) with serine, to form the misacylated tRNA L-seryl-tRNA(Sec), which will be further converted into selenocysteinyl-tRNA(Sec). The polypeptide is Serine--tRNA ligase (Francisella philomiragia subsp. philomiragia (strain ATCC 25017 / CCUG 19701 / FSC 153 / O#319-036)).